A 372-amino-acid chain; its full sequence is Probable arabinan endo-1,5-alpha-L-arabinosidase B (372 aa).

Residues 1-16 form the signal peptide; sequence MTVLVALFCLVTWTLC. The span at 23–34 shows a compositional bias: low complexity; that stretch reads STQGTQQPQQPE. The disordered stretch occupies residues 23–52; sequence STQGTQQPQQPEKTPHPHPQPEDAFPPTHA. Residue aspartate 59 is the Proton acceptor of the active site. Asparagine 120 is a glycosylation site (N-linked (GlcNAc...) asparagine). The active-site Proton donor is glutamate 252. N-linked (GlcNAc...) asparagine glycosylation is present at asparagine 363.

It belongs to the glycosyl hydrolase 43 family.

Its subcellular location is the secreted. It catalyses the reaction Endohydrolysis of (1-&gt;5)-alpha-arabinofuranosidic linkages in (1-&gt;5)-arabinans.. It participates in glycan metabolism; L-arabinan degradation. Endo-1,5-alpha-L-arabinanase involved in degradation of pectin. Its preferred substrate is linear 1,5-alpha-L-arabinan. The polypeptide is Probable arabinan endo-1,5-alpha-L-arabinosidase B (abnB) (Aspergillus fumigatus (strain CBS 144.89 / FGSC A1163 / CEA10) (Neosartorya fumigata)).